The sequence spans 248 residues: Ubiquinone/menaquinone biosynthesis C-methyltransferase UbiE (248 aa).

S-adenosyl-L-methionine contacts are provided by residues S68, D92, and 120-121 (NA).

The protein belongs to the class I-like SAM-binding methyltransferase superfamily. MenG/UbiE family.

The catalysed reaction is a 2-demethylmenaquinol + S-adenosyl-L-methionine = a menaquinol + S-adenosyl-L-homocysteine + H(+). It catalyses the reaction a 2-methoxy-6-(all-trans-polyprenyl)benzene-1,4-diol + S-adenosyl-L-methionine = a 5-methoxy-2-methyl-3-(all-trans-polyprenyl)benzene-1,4-diol + S-adenosyl-L-homocysteine + H(+). It functions in the pathway quinol/quinone metabolism; menaquinone biosynthesis; menaquinol from 1,4-dihydroxy-2-naphthoate: step 2/2. It participates in cofactor biosynthesis; ubiquinone biosynthesis. Its function is as follows. Methyltransferase required for the conversion of demethylmenaquinol (DMKH2) to menaquinol (MKH2) and the conversion of 2-polyprenyl-6-methoxy-1,4-benzoquinol (DDMQH2) to 2-polyprenyl-3-methyl-6-methoxy-1,4-benzoquinol (DMQH2). The chain is Ubiquinone/menaquinone biosynthesis C-methyltransferase UbiE from Rickettsia typhi (strain ATCC VR-144 / Wilmington).